Consider the following 329-residue polypeptide: ATP phosphoribosyltransferase regulatory subunit (329 aa).

It belongs to the class-II aminoacyl-tRNA synthetase family. HisZ subfamily. As to quaternary structure, heteromultimer composed of HisG and HisZ subunits.

It localises to the cytoplasm. It participates in amino-acid biosynthesis; L-histidine biosynthesis; L-histidine from 5-phospho-alpha-D-ribose 1-diphosphate: step 1/9. Its function is as follows. Required for the first step of histidine biosynthesis. May allow the feedback regulation of ATP phosphoribosyltransferase activity by histidine. The protein is ATP phosphoribosyltransferase regulatory subunit of Streptococcus gordonii (strain Challis / ATCC 35105 / BCRC 15272 / CH1 / DL1 / V288).